Here is a 448-residue protein sequence, read N- to C-terminus: Probable glycine dehydrogenase (decarboxylating) subunit 1 (448 aa).

Belongs to the GcvP family. N-terminal subunit subfamily. In terms of assembly, the glycine cleavage system is composed of four proteins: P, T, L and H. In this organism, the P 'protein' is a heterodimer of two subunits.

It catalyses the reaction N(6)-[(R)-lipoyl]-L-lysyl-[glycine-cleavage complex H protein] + glycine + H(+) = N(6)-[(R)-S(8)-aminomethyldihydrolipoyl]-L-lysyl-[glycine-cleavage complex H protein] + CO2. The glycine cleavage system catalyzes the degradation of glycine. The P protein binds the alpha-amino group of glycine through its pyridoxal phosphate cofactor; CO(2) is released and the remaining methylamine moiety is then transferred to the lipoamide cofactor of the H protein. The chain is Probable glycine dehydrogenase (decarboxylating) subunit 1 (gcvPA) from Bacillus subtilis (strain 168).